Here is a 529-residue protein sequence, read N- to C-terminus: Transcription factor kayak (529 aa).

Residues 118 to 134 (LQGTDSDNSNASWADAQ) are compositionally biased toward polar residues. Disordered regions lie at residues 118–166 (LQGT…SVNG) and 180–239 (NAGR…CRKR). 2 stretches are compositionally biased toward low complexity: residues 142–153 (TDTSSAHTDSTS) and 182–201 (GRGSTQGSNTNTSNSATPAR). The bZIP domain maps to 219 to 282 (EEKRRIRRER…NQLEFFLRAH (64 aa)). The tract at residues 221–240 (KRRIRRERNKQAAARCRKRR) is basic motif. Residues 247–275 (LTYEVEQLEKKRDGLKKEMETLTDVKNQL) are leucine-zipper. Disordered regions lie at residues 311 to 390 (AGSC…PMST) and 493 to 529 (DGGTGLTPVSGPLVPSQNKHPLELPTPTAEPSKLVSL). Residues 315 to 332 (DSGSSSHHNNNSNDSSNG) are compositionally biased toward low complexity. Over residues 340-350 (SLNSTGRSNSP) the composition is skewed to polar residues. The residue at position 349 (Ser-349) is a Phosphoserine. The span at 363 to 375 (DGGLDSSCLLDQD) shows a compositional bias: low complexity. The segment covering 376-387 (GPPPSKRFPLPP) has biased composition (pro residues).

The protein belongs to the bZIP family. Fos subfamily. As to quaternary structure, homodimer. Heterodimer with Jra. The kay-Jra heterodimer binds more stably to the AP-1 site than either of the two proteins alone.

Its subcellular location is the nucleus. In terms of biological role, developmentally regulated transcription factor AP-1 binds and recognizes the enhancer DNA sequence: 5'-TGA[CG]TCA-3'. May play a role in the function or determination of a particular subset of cells in the developing embryo. Is able to carry out its function either independently of or in conjunction with Jra. This is Transcription factor kayak from Drosophila ananassae (Fruit fly).